We begin with the raw amino-acid sequence, 429 residues long: Arginine biosynthesis bifunctional protein ArgJ (429 aa).

Substrate is bound by residues Thr-181, Lys-207, Thr-218, Glu-302, Asn-424, and Ser-429. Thr-218 acts as the Nucleophile in catalysis.

This sequence belongs to the ArgJ family. Heterotetramer of two alpha and two beta chains.

The protein localises to the cytoplasm. It carries out the reaction N(2)-acetyl-L-ornithine + L-glutamate = N-acetyl-L-glutamate + L-ornithine. It catalyses the reaction L-glutamate + acetyl-CoA = N-acetyl-L-glutamate + CoA + H(+). It functions in the pathway amino-acid biosynthesis; L-arginine biosynthesis; L-ornithine and N-acetyl-L-glutamate from L-glutamate and N(2)-acetyl-L-ornithine (cyclic): step 1/1. It participates in amino-acid biosynthesis; L-arginine biosynthesis; N(2)-acetyl-L-ornithine from L-glutamate: step 1/4. Functionally, catalyzes two activities which are involved in the cyclic version of arginine biosynthesis: the synthesis of N-acetylglutamate from glutamate and acetyl-CoA as the acetyl donor, and of ornithine by transacetylation between N(2)-acetylornithine and glutamate. This chain is Arginine biosynthesis bifunctional protein ArgJ, found in Chlorobium chlorochromatii (strain CaD3).